Here is a 231-residue protein sequence, read N- to C-terminus: Large ribosomal subunit protein uL1 (231 aa).

This sequence belongs to the universal ribosomal protein uL1 family. In terms of assembly, part of the 50S ribosomal subunit.

In terms of biological role, binds directly to 23S rRNA. The L1 stalk is quite mobile in the ribosome, and is involved in E site tRNA release. Functionally, protein L1 is also a translational repressor protein, it controls the translation of the L11 operon by binding to its mRNA. This Pseudomonas fluorescens (strain Pf0-1) protein is Large ribosomal subunit protein uL1.